A 788-amino-acid polypeptide reads, in one-letter code: Histidine--tRNA ligase, cytoplasmic (788 aa).

Residues 252 to 286 are disordered; the sequence is PQACEENEAGSSTENPHASGEKPKGDKKSKKKKTL.

It belongs to the class-II aminoacyl-tRNA synthetase family. Homodimer.

The catalysed reaction is tRNA(His) + L-histidine + ATP = L-histidyl-tRNA(His) + AMP + diphosphate + H(+). The protein is Histidine--tRNA ligase, cytoplasmic of Oryza sativa subsp. japonica (Rice).